The primary structure comprises 427 residues: MSGSRKQEAIDELRNSLDVPADTAQSVLESFNWDVQEAIESLTGESSRVDRNSKLGLSFGVFQSVFSLLFSGLHKLWMILSRVPLISTFIPIFGTTKRVLSPADTANKLVQNLEEQYGTEHIDFFTDGGYMEALTRIKRNYGVALLFFTSSKNDDSETFSRSVLMNQELKEFLNRRNILCWTGDVCEDEAFRGSRQFHCTKFPSAVLVMYSPQLSELVVAAQLHGCLDSSSIITNLTNALAKHLPSLERFRSEREAREAARELRRQQDNAYQASLARDRERQAFARAEEERLAKEKEEREIVQKKKKQYRAWLASNLPPEPSSEDEPARLSIRFPDGSRAVRRFKKDDTVESVYNYVDYMLFEKEEPEEFGRATSSSNPVTPPSDYKHDFHFQLYSSLPRALLKPSVAISTNKAIFPNGTVVVELDD.

A coiled-coil region spans residues 247–311 (LERFRSEREA…VQKKKKQYRA (65 aa)). Residues 323–425 (SEDEPARLSI…FPNGTVVVEL (103 aa)) form the UBX domain.

Its subcellular location is the endoplasmic reticulum. Involved in protein degradation through the ubiquitin/proteasome pathway. The sequence is that of UBX domain-containing protein 10 (ucp10) from Schizosaccharomyces pombe (strain 972 / ATCC 24843) (Fission yeast).